We begin with the raw amino-acid sequence, 316 residues long: tRNA selenocysteine 1-associated protein 1-like (316 aa).

2 RRM domains span residues 6–89 (TSLW…YATY) and 99–178 (FSVF…IAVN). A compositionally biased stretch (pro residues) spans 239–248 (PPMGMPPMPP). Positions 239-285 (PPMGMPPMPPDMQGSTEAHDGTEEVEEDPSEDPNPQVDVEELNRQYM) are disordered.

The protein belongs to the RRM TRSPAP family.

The protein resides in the nucleus. The protein localises to the cytoplasm. Functionally, involved in the early steps of selenocysteine biosynthesis and tRNA(Sec) charging to the later steps resulting in the cotranslational incorporation of selenocysteine into selenoproteins. The chain is tRNA selenocysteine 1-associated protein 1-like (trnau1apl) from Danio rerio (Zebrafish).